Here is a 141-residue protein sequence, read N- to C-terminus: Protein C19orf12 homolog (141 aa).

A helical transmembrane segment spans residues 37–57 (AVAFVGGLVGGPPGLAVGGAV).

The protein belongs to the C19orf12 family.

The protein localises to the mitochondrion. It localises to the mitochondrion membrane. It is found in the endoplasmic reticulum. The protein resides in the cytoplasm. Its subcellular location is the cytosol. This is Protein C19orf12 homolog from Bos taurus (Bovine).